Here is a 156-residue protein sequence, read N- to C-terminus: Cytochrome c-type biogenesis protein CcmE 1 (156 aa).

Residues 1–8 (MNATRRQR) are Cytoplasmic-facing. Residues 9–29 (LWWVICVLTAAALAVTLIVFA) traverse the membrane as a helical; Signal-anchor for type II membrane protein segment. Residues 30–156 (LQRNMSYLFT…ATATPLTAPR (127 aa)) are Periplasmic-facing. His-123 and Tyr-127 together coordinate heme. Positions 137–156 (AEGHAGKPIPATATPLTAPR) are disordered. A compositionally biased stretch (low complexity) spans 146–156 (PATATPLTAPR).

The protein belongs to the CcmE/CycJ family.

Its subcellular location is the cell inner membrane. In terms of biological role, heme chaperone required for the biogenesis of c-type cytochromes. Transiently binds heme delivered by CcmC and transfers the heme to apo-cytochromes in a process facilitated by CcmF and CcmH. In Xanthomonas euvesicatoria pv. vesicatoria (strain 85-10) (Xanthomonas campestris pv. vesicatoria), this protein is Cytochrome c-type biogenesis protein CcmE 1.